We begin with the raw amino-acid sequence, 373 residues long: Phosphoserine aminotransferase (373 aa).

Arg41 provides a ligand contact to L-glutamate. Pyridoxal 5'-phosphate is bound by residues Gly75 to Thr76, Trp101, Thr152, Asp172, and Gln195. Lys196 carries the post-translational modification N6-(pyridoxal phosphate)lysine. Asn236–Thr237 is a pyridoxal 5'-phosphate binding site.

Belongs to the class-V pyridoxal-phosphate-dependent aminotransferase family. SerC subfamily. As to quaternary structure, homodimer. Requires pyridoxal 5'-phosphate as cofactor.

The protein localises to the cytoplasm. It catalyses the reaction O-phospho-L-serine + 2-oxoglutarate = 3-phosphooxypyruvate + L-glutamate. The catalysed reaction is 4-(phosphooxy)-L-threonine + 2-oxoglutarate = (R)-3-hydroxy-2-oxo-4-phosphooxybutanoate + L-glutamate. Its pathway is amino-acid biosynthesis; L-serine biosynthesis; L-serine from 3-phospho-D-glycerate: step 2/3. In terms of biological role, catalyzes the reversible conversion of 3-phosphohydroxypyruvate to phosphoserine and of 3-hydroxy-2-oxo-4-phosphonooxybutanoate to phosphohydroxythreonine. This is Phosphoserine aminotransferase from Lactobacillus helveticus (strain DPC 4571).